Consider the following 805-residue polypeptide: MASGSDTKSDDLSTAILKQKSRPNRLIVDESINEDNSMVSLSQAKMDELQLFRGDTVLLKGKKRREAVCIVLSDDTCSDEKIRMNRVVRNNLRVRLGDVISIQPCPDVKYGKRVHVLPIDDTVEGITGNLFEVYLKPYFLEAYRPIRKGDIFLVRGGMRAVEFKVVETDPSPYCIVAPDTVIHCEGEPIKREDEEESLNEVGYDDIGGCRKQLAQIKEMVELPLRHPALFKAIGVKPPRGILLYGPPGTGKTLIARAVANETGAFFFLINGPEIMSKLAGESESNLRKAFEEAEKNAPAIIFIDELDAIAPKREKTHGEVERRIVSQLLTLMDGLKQRAHVIVMAATNRPNSIDPALRRFGRFDREVDIGIPDSTGRLEILQIHTKNMKLSDDVDLEQVANETHGHVGADLAALCSEAALQAIRKKMDLIDLEDETIDAEVMNSLAVTMDDFRWALSQSNPSALRETVVEVPQVTWEDIGGLEDVKRELQELVQYPVEHPDKFLKFGMTPSKGVLFYGPPGCGKTLLAKAIANECQANFISIKGPELLTMWFGESEANVREIFDKARQAAPCVLFFDELDSIAKARGGNIGDGGGAADRVINQILTEMDGMSIKKNVFIIGATNRPDIIDPAILRPGRLDQLIYIPLPDEKSRMAILKANLRKSPVAKDVDVDFLAKMTNGFSGADLTEICQRACKLAIRESIENEIRRERDRQTNPSAMEVEEDDPVPEIRRDHFEEAMRFARRSVSDNDIRKYEMFAQTLQQSRGFGSFRFPAGGQSGAGPSPGAGGGSGGGHFTEEDDDLYG.

Ser-3 is modified (phosphoserine). Residues 247–253, Asn-348, His-384, and 521–526 each bind ATP; these read PGTGKTL and GCGKTL. 2 disordered regions span residues 708-727 and 768-805; these read RRER…EDDP and FGSF…DLYG. Residues 777–795 show a composition bias toward gly residues; sequence GQSGAGPSPGAGGGSGGGH.

This sequence belongs to the AAA ATPase family. In terms of assembly, homohexamer. Forms a ring-shaped particle of 12.5 nm diameter, that displays 6-fold radial symmetry. Interacts with the FACT/DUF complex, which contains subunits ssrp1/duf87 and supt16h/duf140. Post-translationally, phosphorylated. In terms of tissue distribution, expressed in at least oocytes, liver and kidney (at protein level).

Its subcellular location is the cytoplasm. The protein localises to the cytosol. It localises to the endoplasmic reticulum. It is found in the nucleus. The protein resides in the stress granule. It carries out the reaction ATP + H2O = ADP + phosphate + H(+). ATPase activity is inhibited or reduced by lowering pH from 9.0 to 7.0, and by addition of Ca(2+), EDTA, KNO(3) or by treatment with N-ethylmaleimide (NEM). Its function is as follows. Necessary for the fragmentation of Golgi stacks during mitosis and for their reassembly after mitosis. Involved in the formation of the nuclear envelope, and of the transitional endoplasmic reticulum (tER). The transfer of membranes from the endoplasmic reticulum to the Golgi apparatus occurs via 50-70 nm transition vesicles which derive from part-rough, part-smooth transitional elements of the endoplasmic reticulum (tER). Vesicle budding from the tER is an ATP-dependent process. Involved in endoplasmic reticulum stress-induced pre-emptive quality control, a mechanism that selectively attenuates the translocation of newly synthesized proteins into the endoplasmic reticulum and reroutes them to the cytosol for proteasomal degradation. Involved in clearance process by mediating G3BP1 extraction from stress granules. Also involved in DNA damage response: recruited to double-strand breaks (DSBs) sites and promotes the recruitment of tp53bp1 at DNA damage sites. Together with sprtn metalloprotease, involved in the repair of covalent DNA-protein cross-links (DPCs) during DNA synthesis. Involved in interstrand cross-link repair in response to replication stress by mediating unloading of the ubiquitinated CMG helicase complex. Enhances cell cycle progression and inhibits apoptosis at low temperatures. Essential for the maturation of ubiquitin-containing autophagosomes and the clearance of ubiquitinated protein by autophagy. Acts as a negative regulator of type I interferon production by promoting ubiquitination of rigi. May play a role in the ubiquitin-dependent sorting of membrane proteins to lysosomes where they undergo degradation. May more particularly play a role in caveolins sorting in cells. By controlling the steady-state expression of the IGF1R receptor, indirectly regulates the insulin-like growth factor receptor signaling pathway. This Xenopus laevis (African clawed frog) protein is Transitional endoplasmic reticulum ATPase (vcp).